The primary structure comprises 466 residues: Argininosuccinate lyase (466 aa).

Residues Ser-27, Asn-114, and Thr-159 each contribute to the 2-(N(omega)-L-arginino)succinate site. The active-site Proton acceptor is the His-160. Ser-281 functions as the Proton donor in the catalytic mechanism. Asn-289, Tyr-321, Gln-326, and Lys-329 together coordinate 2-(N(omega)-L-arginino)succinate.

The protein belongs to the lyase 1 family. Argininosuccinate lyase subfamily. As to quaternary structure, homotetramer. In terms of tissue distribution, eye lens.

It carries out the reaction 2-(N(omega)-L-arginino)succinate = fumarate + L-arginine. The protein operates within amino-acid biosynthesis; L-arginine biosynthesis; L-arginine from L-ornithine and carbamoyl phosphate: step 3/3. In terms of biological role, delta crystallin, the principal crystallin in embryonic lens, is found only in birds and reptiles. This protein may also function as an enzymatically active argininosuccinate lyase. This is Argininosuccinate lyase (ASL2) from Gallus gallus (Chicken).